Consider the following 130-residue polypeptide: DNA-directed RNA polymerase subunit omega (130 aa).

Residues glutamate 110 to glutamate 130 form a disordered region.

The protein belongs to the RNA polymerase subunit omega family. In terms of assembly, the RNAP catalytic core consists of 2 alpha, 1 beta, 1 beta' and 1 omega subunit. When a sigma factor is associated with the core the holoenzyme is formed, which can initiate transcription.

It catalyses the reaction RNA(n) + a ribonucleoside 5'-triphosphate = RNA(n+1) + diphosphate. Promotes RNA polymerase assembly. Latches the N- and C-terminal regions of the beta' subunit thereby facilitating its interaction with the beta and alpha subunits. The chain is DNA-directed RNA polymerase subunit omega from Afipia carboxidovorans (strain ATCC 49405 / DSM 1227 / KCTC 32145 / OM5) (Oligotropha carboxidovorans).